We begin with the raw amino-acid sequence, 161 residues long: Copper transporter 1 (161 aa).

2 helical membrane passes run 55 to 75 and 109 to 129; these read GGMYALALIFVFALAVIVEFL and VAYLLMLALMSFNGGVFLVAV.

Belongs to the copper transporter (Ctr) (TC 1.A.56) family. SLC31A subfamily. As to quaternary structure, self-interacts. Interacts with SWEET11 and COPT2.

Its subcellular location is the cell membrane. Involved in the transport of copper, in cooperation with SWEET11 and COPT2. Contributes to the removal of copper (Cu) from xylem, and thus to the sensitivity toward bacterial pathogens such as X.oryzae pv. oryzae (Xoo). This is Copper transporter 1 (COPT1) from Oryza sativa subsp. japonica (Rice).